A 116-amino-acid polypeptide reads, in one-letter code: uncharacterized protein (116 aa).

The CHY-type zinc-finger motif lies at 1-72; that stretch reads MCKHVLNAQV…SDEYCPNCDN (72 aa). Residues cysteine 2, histidine 4, cysteine 16, cysteine 17, cysteine 23, cysteine 26, histidine 27, histidine 33, cysteine 45, cysteine 48, cysteine 67, and cysteine 70 each coordinate Zn(2+).

The protein resides in the cytoplasm. This is an uncharacterized protein from Schizosaccharomyces pombe (strain 972 / ATCC 24843) (Fission yeast).